The chain runs to 599 residues: Elongation factor 4 (599 aa).

The 183-residue stretch at 5-187 (SHIRNFSIIA…RLVQSIPAPE (183 aa)) folds into the tr-type G domain. GTP contacts are provided by residues 17–22 (DHGKST) and 134–137 (NKMD).

Belongs to the TRAFAC class translation factor GTPase superfamily. Classic translation factor GTPase family. LepA subfamily.

The protein resides in the cell inner membrane. The catalysed reaction is GTP + H2O = GDP + phosphate + H(+). In terms of biological role, required for accurate and efficient protein synthesis under certain stress conditions. May act as a fidelity factor of the translation reaction, by catalyzing a one-codon backward translocation of tRNAs on improperly translocated ribosomes. Back-translocation proceeds from a post-translocation (POST) complex to a pre-translocation (PRE) complex, thus giving elongation factor G a second chance to translocate the tRNAs correctly. Binds to ribosomes in a GTP-dependent manner. The polypeptide is Elongation factor 4 (Pseudomonas entomophila (strain L48)).